The primary structure comprises 422 residues: Phagosome assembly factor 1 (422 aa).

The protein belongs to the PHAF1 family. Interacts with BCAS3; the interaction is requrired for the association with the phagophore.

It localises to the cytoplasm. It is found in the preautophagosomal structure. Functionally, plays a regulatory role in autophagic activity. In complex with BCAS3, associates with the autophagosome formation site during both non-selective and selective autophagy. The polypeptide is Phagosome assembly factor 1 (Phaf1) (Rattus norvegicus (Rat)).